We begin with the raw amino-acid sequence, 35 residues long: Alpha-amanitin proprotein 2 (35 aa).

The propeptide occupies 1–10; the sequence is MFDTNSTRLP. The residue at position 11 (Ile11) is a (3R,4R)-4,5-dihydroxyisoleucine; in form alpha-amanitin. Ile11 is subject to (3R,4S)-4-hydroxyisoleucine; in form gamma-amanitin. The cyclopeptide (Ile-Pro) cross-link spans 11 to 18; it reads IWGIGCNP. The 2'-cysteinyl-6'-hydroxytryptophan sulfoxide (Trp-Cys) cross-link spans 12-16; the sequence is WGIGC. Pro18 carries the post-translational modification 4-hydroxyproline. Positions 19–35 are excised as a propeptide; sequence WTAEHVDQTLVSGNDIC.

It belongs to the MSDIN fungal toxin family. Post-translationally, processed by the macrocyclase-peptidase enzyme POPB to yield a toxic bicyclic octapeptide. POPB first removes 10 residues from the N-terminus. Conformational trapping of the remaining peptide forces the enzyme to release this intermediate rather than proceed to macrocyclization. The enzyme rebinds the remaining peptide in a different conformation and catalyzes macrocyclization of the N-terminal 8 residues.

Functionally, major toxin belonging to the bicyclic octapeptides amatoxins that acts by binding non-competitively to RNA polymerase II and greatly slowing the elongation of transcripts from target promoters. This chain is Alpha-amanitin proprotein 2, found in Galerina marginata (strain CBS 339.88).